We begin with the raw amino-acid sequence, 317 residues long: Melanocyte-stimulating hormone receptor (317 aa).

Over 1-37 (MAVQGSQRRLLGSLNSTPTAIPQLGLAANQTGAWCLE) the chain is Extracellular. A glycan (N-linked (GlcNAc...) asparagine) is linked at Asn29. A helical transmembrane segment spans residues 38–63 (VSIPDGLFLSLGLVSLVENVLVVATI). Residues 64 to 72 (AKNRNLHSP) are Cytoplasmic-facing. The helical transmembrane segment at 73–93 (MYCFICCLALSDLLVSGGNVL) threads the bilayer. Topologically, residues 94 to 118 (ETAVILLLEAGALAARAAVVQQLDN) are extracellular. The helical transmembrane segment at 119–140 (VIDVITCSSMLSSLCFLGAIAV) threads the bilayer. Topologically, residues 141 to 163 (DRYISIFYALRYHSIVTLPRARR) are cytoplasmic. Residues 164–183 (AIAAIWVASVLFSTLFIAYY) form a helical membrane-spanning segment. At 184-191 (DHAAVLLC) the chain is on the extracellular side. Residues 192–211 (LVVFFLAMLVLMAVLYVHML) form a helical membrane-spanning segment. Topologically, residues 212–240 (ARACQHAQGIARLHKRQRPVHQGFGLKGA) are cytoplasmic. A helical membrane pass occupies residues 241–266 (VTLTILLGIFFLCWGPFFLHLTLIVL). The Extracellular portion of the chain corresponds to 267 to 279 (CPQHPTCSCIFKN). The helical transmembrane segment at 280-300 (FNLFLALIICNAIIDPLIYAF) threads the bilayer. The Cytoplasmic portion of the chain corresponds to 301–317 (RSQELRRTLKEVLTCSW). Cys315 carries S-palmitoyl cysteine lipidation.

This sequence belongs to the G-protein coupled receptor 1 family. Interacts with MGRN1, but does not undergo MGRN1-mediated ubiquitination; this interaction competes with GNAS-binding and thus inhibits agonist-induced cAMP production. Interacts with OPN3; the interaction results in a decrease in MC1R-mediated cAMP signaling and ultimately a decrease in melanin production in melanocytes.

It localises to the cell membrane. Receptor for MSH (alpha, beta and gamma) and ACTH. The activity of this receptor is mediated by G proteins which activate adenylate cyclase. Mediates melanogenesis, the production of eumelanin (black/brown) and phaeomelanin (red/yellow), via regulation of cAMP signaling in melanocytes. The polypeptide is Melanocyte-stimulating hormone receptor (MC1R) (Pongo pygmaeus (Bornean orangutan)).